The primary structure comprises 376 residues: MENQYQRIVSATAREDSQARRSKPLFLNAWSQTSSVDFEVLRSISAPDPQVEVENRALRDKVRYLEAKLQQHKDLLSQIHATSARMQQASSLLAESRPPTPPAVQSHHILTPPSSEICAPAQNPQILDYKIISAPDDADAIEIRLAAESLNSLSTSADSDRLEICLGDENHQQSNHHNSQQQYRISNGIKRDGSSESADTPLQFIKRRKLQEIQLQEEIPRQNIKLPAKPQVKARNGSFTDLNKGQQQNMDNVMVSIGPNNTCVPASVFENINWSVCSLATRKLLVTIFDRETLATHSMTGKPSPAFKDQDKPLKRMLDPGKIQDIIFAVTHKCNASEKEVRNAITTKCADENKMMKIQNVKRRSSGIKHEKENII.

A coiled-coil region spans residues 50 to 79 (QVEVENRALRDKVRYLEAKLQQHKDLLSQI). The region spanning 258 to 356 (GPNNTCVPAS…TKCADENKMM (99 aa)) is the BEN domain.

As to quaternary structure, homodimer. Interacts (via BEN domain) with Su(H). Interacts with Cp190.

Its subcellular location is the nucleus. Its function is as follows. Can act as both a transcriptional repressor and corepressor. Represses the expression of genes involved in neural development and preferentially binds palindromic sequence 5'-CCAATTGG-3' to mediate transcriptional repression. Acts as a corepressor for suppressor of hairless (Su(H)) and inhibits Notch signaling during peripheral nervous system development. This chain is Protein insensitive (insv), found in Drosophila melanogaster (Fruit fly).